Reading from the N-terminus, the 124-residue chain is Fluoride-specific ion channel FluC (124 aa).

Transmembrane regions (helical) follow at residues 1 to 21 (MAYL…HFIN), 36 to 56 (TFFI…YLAF), 66 to 86 (LFLM…SLDA), and 94 to 114 (AVGL…AGLF). Na(+) is bound by residues Gly74 and Thr77.

It belongs to the fluoride channel Fluc/FEX (TC 1.A.43) family.

It is found in the cell inner membrane. It carries out the reaction fluoride(in) = fluoride(out). Na(+) is not transported, but it plays an essential structural role and its presence is essential for fluoride channel function. Its function is as follows. Fluoride-specific ion channel. Important for reducing fluoride concentration in the cell, thus reducing its toxicity. The chain is Fluoride-specific ion channel FluC from Rhodopseudomonas palustris (strain ATCC BAA-98 / CGA009).